A 208-amino-acid chain; its full sequence is MAVVVVNSATASLLAVCLVFMAVGLCTGQIVDVKFPSCRCERELTPFAIKSAATQLTSRNPGVVNLYCFEIGIVNSGSGACYTEPASQNLSKVSVYAQAAQRDRLSAFGVLLAGAPVSNMTYLTPRWDSLNMTTISNLNFSKTQANGTRICLELFKPTTINEFCEREGASGSFCWVALFNDNNCVPPNSTVVISKRLCCPRFQSFLSP.

The N-terminal stretch at 1–11 (MAVVVVNSATA) is a signal peptide. Residues Asn89, Asn119, Asn131, Asn139, Asn146, and Asn188 are each glycosylated (N-linked (GlcNAc...) asparagine).

Its function is as follows. The sexual inducer is a glycoprotein synthesized and released by sexual males at about the time they release sperm packets. It is one of the most potent biological effector molecules known: it exhibits full effectiveness in converting asexually growing males and females to the sexual pathway at about 10(-7) m. This Volvox carteri (Green alga) protein is Sexual inducer glycoprotein.